A 146-amino-acid polypeptide reads, in one-letter code: Large ribosomal subunit protein uL15 (146 aa).

Residues 1-13 (MKLHELKPAEGSR) are compositionally biased toward basic and acidic residues. The interval 1–57 (MKLHELKPAEGSRKVRNRVGRGTSSGNGKTSGRGQKGQKARSGVGLRPGFEGGQTPL) is disordered. The span at 23–35 (TSSGNGKTSGRGQ) shows a compositional bias: gly residues.

The protein belongs to the universal ribosomal protein uL15 family. In terms of assembly, part of the 50S ribosomal subunit.

Binds to the 23S rRNA. In Streptococcus thermophilus (strain CNRZ 1066), this protein is Large ribosomal subunit protein uL15.